A 265-amino-acid chain; its full sequence is MNIAIAGASGRMGRMLIEHILATEGVSLSGALDLPGSPALGQDAGLLLGRQTGVAITADLEAGLAGADCLIDFTRPEGTLAHLAVAKRLGVKMVIGTTGFDDAGKAALAEAAKSIGIVFAANMSVGVNATFKLLEVAAKLLSTGYDIEIIEAHHRFKVDAPSGTALKMGEVVAEALGRDLKTCAVYAREGHTGERDPNSIGFATVRGGDIVGDHTVMFAGIGERIEISHKSSSRQSYADGAVRAARFLADKPNGLFDMQDVLGLK.

Residues 7–12 (GASGRM), Asp33, 96–98 (GTT), and 120–123 (AANM) each bind NAD(+). His153 serves as the catalytic Proton donor/acceptor. Residue His154 coordinates (S)-2,3,4,5-tetrahydrodipicolinate. Catalysis depends on Lys157, which acts as the Proton donor. (S)-2,3,4,5-tetrahydrodipicolinate is bound at residue 163 to 164 (GT).

It belongs to the DapB family.

The protein resides in the cytoplasm. It catalyses the reaction (S)-2,3,4,5-tetrahydrodipicolinate + NAD(+) + H2O = (2S,4S)-4-hydroxy-2,3,4,5-tetrahydrodipicolinate + NADH + H(+). It carries out the reaction (S)-2,3,4,5-tetrahydrodipicolinate + NADP(+) + H2O = (2S,4S)-4-hydroxy-2,3,4,5-tetrahydrodipicolinate + NADPH + H(+). Its pathway is amino-acid biosynthesis; L-lysine biosynthesis via DAP pathway; (S)-tetrahydrodipicolinate from L-aspartate: step 4/4. Catalyzes the conversion of 4-hydroxy-tetrahydrodipicolinate (HTPA) to tetrahydrodipicolinate. This chain is 4-hydroxy-tetrahydrodipicolinate reductase, found in Cupriavidus pinatubonensis (strain JMP 134 / LMG 1197) (Cupriavidus necator (strain JMP 134)).